An 882-amino-acid chain; its full sequence is Translation initiation factor IF-2 (882 aa).

Disordered stretches follow at residues 67–202 (KTVS…EKAR) and 223–278 (ERYG…KHMK). 2 stretches are compositionally biased toward basic and acidic residues: residues 95 to 152 (VKRD…EAKA) and 161 to 202 (EQPK…EKAR). Basic residues predominate over residues 251–264 (GRRNRNKTQTKSKR). The span at 265-274 (GGKDAREGRE) shows a compositional bias: basic and acidic residues. The region spanning 382–551 (PRAPVVTIMG…LLQAEVLELK (170 aa)) is the tr-type G domain. Residues 391 to 398 (GHVDHGKT) form a G1 region. 391–398 (GHVDHGKT) is a GTP binding site. Residues 416 to 420 (GITQH) form a G2 region. A G3 region spans residues 437-440 (DTPG). Residues 437–441 (DTPGH) and 491–494 (NKMD) contribute to the GTP site. Positions 491–494 (NKMD) are G4. Residues 527 to 529 (SAK) are G5.

The protein belongs to the TRAFAC class translation factor GTPase superfamily. Classic translation factor GTPase family. IF-2 subfamily.

The protein resides in the cytoplasm. One of the essential components for the initiation of protein synthesis. Protects formylmethionyl-tRNA from spontaneous hydrolysis and promotes its binding to the 30S ribosomal subunits. Also involved in the hydrolysis of GTP during the formation of the 70S ribosomal complex. This is Translation initiation factor IF-2 from Shewanella amazonensis (strain ATCC BAA-1098 / SB2B).